The chain runs to 337 residues: Phosphate acyltransferase (337 aa).

This sequence belongs to the PlsX family. As to quaternary structure, homodimer. Probably interacts with PlsY.

It is found in the cytoplasm. The catalysed reaction is a fatty acyl-[ACP] + phosphate = an acyl phosphate + holo-[ACP]. Its pathway is lipid metabolism; phospholipid metabolism. Catalyzes the reversible formation of acyl-phosphate (acyl-PO(4)) from acyl-[acyl-carrier-protein] (acyl-ACP). This enzyme utilizes acyl-ACP as fatty acyl donor, but not acyl-CoA. The polypeptide is Phosphate acyltransferase (Listeria innocua serovar 6a (strain ATCC BAA-680 / CLIP 11262)).